The sequence spans 447 residues: N-succinylarginine dihydrolase (447 aa).

Residues 19–28 (AGLSFGNEAS), Asn-110, and 137–138 (HR) each bind substrate. Glu-174 is a catalytic residue. Arg-212 is a binding site for substrate. Residue His-248 is part of the active site. Residues Asp-250 and Asn-359 each contribute to the substrate site. Catalysis depends on Cys-365, which acts as the Nucleophile.

Belongs to the succinylarginine dihydrolase family. In terms of assembly, homodimer.

It catalyses the reaction N(2)-succinyl-L-arginine + 2 H2O + 2 H(+) = N(2)-succinyl-L-ornithine + 2 NH4(+) + CO2. It participates in amino-acid degradation; L-arginine degradation via AST pathway; L-glutamate and succinate from L-arginine: step 2/5. Functionally, catalyzes the hydrolysis of N(2)-succinylarginine into N(2)-succinylornithine, ammonia and CO(2). The chain is N-succinylarginine dihydrolase from Salmonella gallinarum (strain 287/91 / NCTC 13346).